A 170-amino-acid polypeptide reads, in one-letter code: Bifunctional protein PyrR (170 aa).

Residues 90–102 carry the PRPP-binding motif; that stretch reads LVLVDDVLMSGRT.

It belongs to the purine/pyrimidine phosphoribosyltransferase family. PyrR subfamily.

It catalyses the reaction UMP + diphosphate = 5-phospho-alpha-D-ribose 1-diphosphate + uracil. Its function is as follows. Regulates the transcription of the pyrimidine nucleotide (pyr) operon in response to exogenous pyrimidines. In terms of biological role, also displays a weak uracil phosphoribosyltransferase activity which is not physiologically significant. The polypeptide is Bifunctional protein PyrR (Pseudomonas aeruginosa (strain LESB58)).